Consider the following 821-residue polypeptide: Leucine--tRNA ligase (821 aa).

Residues 40–50 (PYPSGRIHMGH) carry the 'HIGH' region motif. Residues 586–590 (KMSKS) carry the 'KMSKS' region motif. K589 is an ATP binding site.

This sequence belongs to the class-I aminoacyl-tRNA synthetase family.

Its subcellular location is the cytoplasm. The enzyme catalyses tRNA(Leu) + L-leucine + ATP = L-leucyl-tRNA(Leu) + AMP + diphosphate. The sequence is that of Leucine--tRNA ligase from Aliarcobacter butzleri (strain RM4018) (Arcobacter butzleri).